Here is a 261-residue protein sequence, read N- to C-terminus: CD40 ligand (261 aa).

Residues 1 to 22 lie on the Cytoplasmic side of the membrane; that stretch reads MIETYNQTSPRSAATGLPISMK. Residues 23-46 traverse the membrane as a helical; Signal-anchor for type II membrane protein segment; that stretch reads IFMYLLTVFLITQMIGSALFAVYL. The Extracellular segment spans residues 47 to 261; it reads HRRLDKIEDE…GFTSFGLLKL (215 aa). One can recognise a THD domain in the interval 122–261; that stretch reads IAAHVISEAS…GFTSFGLLKL (140 aa). C178 and C218 form a disulfide bridge. N-linked (GlcNAc...) (complex) asparagine; alternate glycosylation is present at N240. N240 carries N-linked (GlcNAc...) (high mannose) asparagine; alternate glycosylation.

This sequence belongs to the tumor necrosis factor family. Homotrimer. Interacts with isoform 3 of CD28. CD40 ligand, soluble form: Exists as either a monomer or a homotrimer. Forms a ternary complex between CD40 and integrins for CD40-CD40LG signaling. The soluble form derives from the membrane form by proteolytic processing. In terms of processing, N-linked glycan is a mixture of high mannose and complex type. Glycan structure does not influence binding affinity to CD40. Post-translationally, not O-glycosylated. As to expression, specifically expressed on activated CD4+ T-lymphocytes.

The protein resides in the cell membrane. It is found in the cell surface. Its subcellular location is the secreted. Functionally, cytokine that acts as a ligand to CD40/TNFRSF5. Costimulates T-cell proliferation and cytokine production. Its cross-linking on T-cells generates a costimulatory signal which enhances the production of IL4 and IL10 in conjunction with the TCR/CD3 ligation and CD28 costimulation. Induces the activation of NF-kappa-B. Induces the activation of kinases MAPK8 and PAK2 in T-cells. Induces tyrosine phosphorylation of isoform 3 of CD28. Mediates B-cell proliferation in the absence of co-stimulus as well as IgE production in the presence of IL4. Involved in immunoglobulin class switching. Acts as a ligand for integrins, specifically ITGA5:ITGB1 and ITGAV:ITGB3; both integrins and the CD40 receptor are required for activation of CD40-CD40LG signaling, which have cell-type dependent effects, such as B-cell activation, NF-kappa-B signaling and anti-apoptotic signaling. The chain is CD40 ligand (CD40LG) from Homo sapiens (Human).